Consider the following 109-residue polypeptide: Large ribosomal subunit protein uL22 (109 aa).

The protein belongs to the universal ribosomal protein uL22 family. In terms of assembly, part of the 50S ribosomal subunit.

Functionally, this protein binds specifically to 23S rRNA; its binding is stimulated by other ribosomal proteins, e.g. L4, L17, and L20. It is important during the early stages of 50S assembly. It makes multiple contacts with different domains of the 23S rRNA in the assembled 50S subunit and ribosome. Its function is as follows. The globular domain of the protein is located near the polypeptide exit tunnel on the outside of the subunit, while an extended beta-hairpin is found that lines the wall of the exit tunnel in the center of the 70S ribosome. This Polynucleobacter asymbioticus (strain DSM 18221 / CIP 109841 / QLW-P1DMWA-1) (Polynucleobacter necessarius subsp. asymbioticus) protein is Large ribosomal subunit protein uL22.